A 621-amino-acid polypeptide reads, in one-letter code: Rab proteins geranylgeranyltransferase component A 2 (621 aa).

The interval 113-171 (VQDTETLQRSSPLEASATPADSLDSASLPKERQSAYSTSYEVPSRHTEESDRELSLPSA) is disordered. Polar residues predominate over residues 115–125 (DTETLQRSSPL). The segment covering 155–166 (PSRHTEESDREL) has biased composition (basic and acidic residues).

This sequence belongs to the Rab GDI family. Monomer. Heterotrimer composed of RABGGTA, RABGGTB and CHML; within this trimer, RABGGTA and RABGGTB form the catalytic component B, while CHML (component A) mediates Rab protein binding. Interacts with RAB1A, RAB7A and RAB27A, but has much lower affinity for RAB1A, RAB7A and RAB27A than CHM. Interacts with the non-phosphorylated forms of RAB3A, RAB3B, RAB3C, RAB3D, RAB5B, RAB5C, RAB8A, RAB8B, RAB10, RAB12, RAB35, and RAB43.

The protein resides in the cytoplasm. Its subcellular location is the cytosol. Functionally, substrate-binding subunit (component A) of the Rab geranylgeranyltransferase (GGTase) complex. Binds unprenylated Rab proteins and presents the substrate peptide to the catalytic component B. The component A is thought to be regenerated by transferring its prenylated Rab back to the donor membrane. Less effective than CHM in supporting prenylation of Rab3 family. In Mus musculus (Mouse), this protein is Rab proteins geranylgeranyltransferase component A 2 (Chml).